The chain runs to 183 residues: Photosystem I assembly protein Ycf4 (183 aa).

Helical transmembrane passes span 21–43 (YIWG…SSYL) and 63–85 (LVMC…LILW).

Belongs to the Ycf4 family.

It is found in the plastid. It localises to the chloroplast thylakoid membrane. Its function is as follows. Seems to be required for the assembly of the photosystem I complex. This chain is Photosystem I assembly protein Ycf4, found in Chlorella vulgaris (Green alga).